The following is a 353-amino-acid chain: Histidinol-phosphate aminotransferase (353 aa).

An N6-(pyridoxal phosphate)lysine modification is found at K218.

This sequence belongs to the class-II pyridoxal-phosphate-dependent aminotransferase family. Histidinol-phosphate aminotransferase subfamily. As to quaternary structure, homodimer. The cofactor is pyridoxal 5'-phosphate.

The enzyme catalyses L-histidinol phosphate + 2-oxoglutarate = 3-(imidazol-4-yl)-2-oxopropyl phosphate + L-glutamate. The protein operates within amino-acid biosynthesis; L-histidine biosynthesis; L-histidine from 5-phospho-alpha-D-ribose 1-diphosphate: step 7/9. This chain is Histidinol-phosphate aminotransferase, found in Synechococcus sp. (strain JA-2-3B'a(2-13)) (Cyanobacteria bacterium Yellowstone B-Prime).